We begin with the raw amino-acid sequence, 503 residues long: MVLLGLLQSGGSVLGQAMEQVTGGNLLSTLLIACAFTLSLVYLFRLAVGHMVQLPAGAKSPPYIYSPIPFLGHAIAFGKSPIEFLENAYEKYGPVFSFTMVGKTFTYLLGSDAAALLFNSKNEDLNAEEVYGRLTTPVFGKGVAYDVPNAVFLEQKKILKSGLNIAHFKQYVSIIEKEAKEYFKSWGESGERNVFEALSELIILTASHCLHGKEIRSQLNEKVAQLYADLDGGFSHAAWLLPGWLPLPSFRRRDRAHREIKNIFYKAIQKRRLSKEPAEDILQTLLDSTYKDGRPLTDDEIAGMLIGLLLAGQHTSSTTSAWMGFFLARDKPLQDKCYLEQKTVCGEDLPPLTYEQLKDLNLLDRCIKETLRLRPPIMTMMRMAKTPQTVAGYTIPPGHQVCVSPTVNQRLKDSWVERLDFNPDRYLQDNPASGEKFAYVPFGAGRHRCIGENFAYVQIKTIWSTMLRLYEFDLINGYFPSVNYTTMIHTPENPVIRYKRRSK.

A helical membrane pass occupies residues Gly24 to Phe44. Residue Cys449 coordinates heme.

The protein belongs to the cytochrome P450 family. The cofactor is heme. In terms of processing, ubiquitinated by MARCHF6, leading to proteasomal degradation.

It is found in the endoplasmic reticulum membrane. The protein localises to the microsome membrane. It carries out the reaction a 14alpha-methyl steroid + 3 reduced [NADPH--hemoprotein reductase] + 3 O2 = a Delta(14) steroid + formate + 3 oxidized [NADPH--hemoprotein reductase] + 4 H2O + 4 H(+). The catalysed reaction is lanosterol + 3 reduced [NADPH--hemoprotein reductase] + 3 O2 = 4,4-dimethyl-5alpha-cholesta-8,14,24-trien-3beta-ol + formate + 3 oxidized [NADPH--hemoprotein reductase] + 4 H2O + 4 H(+). It catalyses the reaction 24,25-dihydrolanosterol + 3 reduced [NADPH--hemoprotein reductase] + 3 O2 = 4,4-dimethyl-8,14-cholestadien-3beta-ol + formate + 3 oxidized [NADPH--hemoprotein reductase] + 4 H2O + 4 H(+). The enzyme catalyses a 14alpha-methyl steroid + reduced [NADPH--hemoprotein reductase] + O2 = a 14alpha-hydroxymethyl steroid + oxidized [NADPH--hemoprotein reductase] + H2O + H(+). It carries out the reaction a 14alpha-hydroxymethyl steroid + reduced [NADPH--hemoprotein reductase] + O2 = a 14alpha-formyl steroid + oxidized [NADPH--hemoprotein reductase] + 2 H2O + H(+). The catalysed reaction is a 14alpha-formyl steroid + reduced [NADPH--hemoprotein reductase] + O2 = a Delta(14) steroid + formate + oxidized [NADPH--hemoprotein reductase] + H2O + 2 H(+). It catalyses the reaction lanosterol + reduced [NADPH--hemoprotein reductase] + O2 = 32-hydroxylanosterol + oxidized [NADPH--hemoprotein reductase] + H2O + H(+). The enzyme catalyses 32-hydroxylanosterol + reduced [NADPH--hemoprotein reductase] + O2 = 32-oxolanosterol + oxidized [NADPH--hemoprotein reductase] + 2 H2O + H(+). It carries out the reaction 32-oxolanosterol + reduced [NADPH--hemoprotein reductase] + O2 = 4,4-dimethyl-5alpha-cholesta-8,14,24-trien-3beta-ol + formate + oxidized [NADPH--hemoprotein reductase] + H2O + 2 H(+). The catalysed reaction is 24,25-dihydrolanosterol + reduced [NADPH--hemoprotein reductase] + O2 = 32-hydroxy-24,25-dihydrolanosterol + oxidized [NADPH--hemoprotein reductase] + H2O + H(+). It catalyses the reaction 32-hydroxy-24,25-dihydrolanosterol + reduced [NADPH--hemoprotein reductase] + O2 = 32-oxo-24,25-dihydrolanosterol + oxidized [NADPH--hemoprotein reductase] + 2 H2O + H(+). The enzyme catalyses 32-oxo-24,25-dihydrolanosterol + reduced [NADPH--hemoprotein reductase] + O2 = 4,4-dimethyl-8,14-cholestadien-3beta-ol + formate + oxidized [NADPH--hemoprotein reductase] + H2O + 2 H(+). It participates in steroid biosynthesis; zymosterol biosynthesis; zymosterol from lanosterol: step 1/6. Its activity is regulated as follows. Inhibited by azalanstat. Inhibited by azole antifungal agents ketoconazole, itraconazole and fluconazole. Sterol 14alpha-demethylase that plays a critical role in the cholesterol biosynthesis pathway, being cholesterol the major sterol component in mammalian membranes as well as a precursor for bile acid and steroid hormone synthesis. Cytochrome P450 monooxygenase that catalyzes the three-step oxidative removal of the 14alpha-methyl group (C-32) of sterols such as lanosterol (lanosta-8,24-dien-3beta-ol) and 24,25-dihydrolanosterol (DHL) in the form of formate, and converts the sterols to 4,4-dimethyl-5alpha-cholesta-8,14,24-trien-3beta-ol and 4,4-dimethyl-8,14-cholestadien-3beta-ol, respectively, which are intermediates of cholesterol biosynthesis. Can also demethylate substrates not intrinsic to mammals, such as eburicol (24-methylene-24,25-dihydrolanosterol), but at a lower rate than DHL. The sequence is that of Lanosterol 14-alpha demethylase from Rattus norvegicus (Rat).